The primary structure comprises 546 residues: Protein RDR1 (546 aa).

The segment at residues 20–46 (CVPCRERKRKCNGKSPCEMCVAYGYVC) is a DNA-binding region (zn(2)-C6 fungal-type).

The protein localises to the nucleus. Its function is as follows. Transcriptional repressor of multidrug resistance genes, such as PDR5. Required for growth on non-fermentable carbon sources like lactate or glycerol. The sequence is that of Protein RDR1 (RDR1) from Saccharomyces cerevisiae (strain ATCC 204508 / S288c) (Baker's yeast).